Consider the following 495-residue polypeptide: ATP synthase subunit alpha, chloroplastic (495 aa).

170 to 177 contributes to the ATP binding site; sequence GDRQTGKT.

Belongs to the ATPase alpha/beta chains family. F-type ATPases have 2 components, CF(1) - the catalytic core - and CF(0) - the membrane proton channel. CF(1) has five subunits: alpha(3), beta(3), gamma(1), delta(1), epsilon(1). CF(0) has four main subunits: a, b, b' and c.

The protein localises to the plastid. The protein resides in the chloroplast thylakoid membrane. It carries out the reaction ATP + H2O + 4 H(+)(in) = ADP + phosphate + 5 H(+)(out). Functionally, produces ATP from ADP in the presence of a proton gradient across the membrane. The alpha chain is a regulatory subunit. The polypeptide is ATP synthase subunit alpha, chloroplastic (Cyanidioschyzon merolae (strain NIES-3377 / 10D) (Unicellular red alga)).